The sequence spans 301 residues: (R)-2-haloacid dehalogenase (301 aa).

The protein belongs to the HAD-like hydrolase superfamily. S-2-haloalkanoic acid dehalogenase family. Homotetramer.

It catalyses the reaction an (R)-2-haloacid + H2O = a (2S)-2-hydroxycarboxylate + a halide anion + H(+). Catalyzes the hydrolytic dehalogenation of small (R)-2-haloalkanoic acids to yield the corresponding (S)-2-hydroxyalkanoic acids. Acts on acids of short chain lengths, C(2) to C(4), with inversion of configuration at C-2. The protein is (R)-2-haloacid dehalogenase (hadD) of Pseudomonas putida (Arthrobacter siderocapsulatus).